Consider the following 286-residue polypeptide: Probable tRNA(His) guanylyltransferase (286 aa).

Mg(2+) contacts are provided by D29, G30, and D76. GTP-binding positions include 29-34 (DGKKFH) and 75-76 (SD).

It belongs to the tRNA(His) guanylyltransferase family. It depends on Mg(2+) as a cofactor.

The enzyme catalyses a 5'-end ribonucleotide-tRNA(His) + GTP + ATP + H2O = a 5'-end phospho-guanosine-ribonucleotide-tRNA(His) + AMP + 2 diphosphate + H(+). Functionally, adds a GMP to the 5'-end of tRNA(His) after transcription and RNase P cleavage. This chain is Probable tRNA(His) guanylyltransferase, found in Drosophila melanogaster (Fruit fly).